We begin with the raw amino-acid sequence, 84 residues long: RQC P-site tRNA stabilizing factor (84 aa).

Residues 1-64 (MRIDKFLQSV…IEEYTILQIP (64 aa)) form the S4 RNA-binding domain.

This sequence belongs to the RqcP family. Associates with stalled 50S ribosomal subunits. Binds to RqcH, 23S rRNA and the P-site tRNA. Does not require RqcH for association with 50S subunits.

Its function is as follows. Key component of the ribosome quality control system (RQC), a ribosome-associated complex that mediates the extraction of incompletely synthesized nascent chains from stalled ribosomes and their subsequent degradation. RqcH recruits Ala-charged tRNA, and with RqcP directs the elongation of stalled nascent chains on 50S ribosomal subunits, leading to non-templated C-terminal alanine extensions (Ala tail). The Ala tail promotes nascent chain degradation. RqcP is associated with the translocation-like movement of the peptidyl-tRNA from the A-site into the P-site. The sequence is that of RQC P-site tRNA stabilizing factor from Helicobacter pylori (strain ATCC 700392 / 26695) (Campylobacter pylori).